The following is a 236-amino-acid chain: RING-H2 finger protein ATL7 (236 aa).

Residues 31–51 (AFIFSVPICFTFIVLFVLYVI) form a helical membrane-spanning segment. The RING-type; atypical zinc finger occupies 111–153 (CSVCLGDYQAEEKLQQMPSCGHTFHMECIDLWLTSHTTCPLCR). Residues 176 to 196 (ENSNGGEASTQPDSQSATEAI) are compositionally biased toward polar residues. Residues 176–236 (ENSNGGEAST…SDGCCTCRLG (61 aa)) form a disordered region. The span at 197–221 (SHTDDVEEGNRDSQEVSKETEENDR) shows a compositional bias: basic and acidic residues.

Belongs to the RING-type zinc finger family. ATL subfamily.

It localises to the membrane. The catalysed reaction is S-ubiquitinyl-[E2 ubiquitin-conjugating enzyme]-L-cysteine + [acceptor protein]-L-lysine = [E2 ubiquitin-conjugating enzyme]-L-cysteine + N(6)-ubiquitinyl-[acceptor protein]-L-lysine.. It functions in the pathway protein modification; protein ubiquitination. In Arabidopsis thaliana (Mouse-ear cress), this protein is RING-H2 finger protein ATL7 (ATL7).